A 356-amino-acid polypeptide reads, in one-letter code: Leucine-rich repeat and transmembrane domain-containing protein 1 (356 aa).

The signal sequence occupies residues 1–32; the sequence is MLNEGLCCGAWAMKGTLLLVSSVGLLLPGVGS. In terms of domain architecture, LRRNT spans 33-62; the sequence is CPMKCLCHPSSNSVDCSGQGLSKVPRDLPP. Residues 33-299 are Extracellular-facing; the sequence is CPMKCLCHPS…PTNLRHAVAT (267 aa). 5 LRR repeats span residues 63–84, 87–108, 111–132, 135–156, and 159–180; these read WTVTLLLQDNRIHWLPALAFQS, LLSTLNLSNNSLSNLAAEAFYG, HLRVLNVTQNSLLSIESSFAHA, GLRELDLSSNSLRILPTSLGKP, and NLTVFAVQQNHLLHLDRELLEA. N-linked (GlcNAc...) asparagine glycosylation is found at Asn92 and Asn116. An N-linked (GlcNAc...) asparagine glycan is attached at Asn159. Residues 192–246 enclose the LRRCT domain; sequence NPWICDCHLLGLKLWLERFTFQGGETDGAICRLPEPWQGKALLSIPHELYQPCSL. A compositionally biased stretch (polar residues) spans 255–277; it reads LVQQPGSAPQDAQKSHENSSGQQ. The tract at residues 255–288 is disordered; that stretch reads LVQQPGSAPQDAQKSHENSSGQQDPLECEAKPKP. The chain crosses the membrane as a helical span at residues 300-320; it reads VVITGVVCGIVCLMMLAAAIY. Residues 321–356 are Cytoplasmic-facing; sequence GCTYAAITAQYQGRPLASARKSEKMGSKELMDSSSA.

Its subcellular location is the membrane. In Mus musculus (Mouse), this protein is Leucine-rich repeat and transmembrane domain-containing protein 1 (Lrtm1).